The primary structure comprises 193 residues: Ion-translocating oxidoreductase complex subunit A (193 aa).

The next 6 membrane-spanning stretches (helical) occupy residues 5 to 25 (LLLLVGTVLINNFVLVKFLGL), 39 to 59 (IGMGLATTFVMTLASACSYLM), 63 to 83 (ILIPLNIAYLRTLAFILVIAV), 102 to 122 (LLGIFLPLITTNCAVLGVALL), 134 to 154 (IIYGFGAATGFSLVLILFAAM), and 171 to 191 (SIAMITAGLMSLAFMGFTGLI).

It belongs to the NqrDE/RnfAE family. As to quaternary structure, the complex is composed of six subunits: RnfA, RnfB, RnfC, RnfD, RnfE and RnfG.

The protein localises to the cell inner membrane. Part of a membrane-bound complex that couples electron transfer with translocation of ions across the membrane. This chain is Ion-translocating oxidoreductase complex subunit A, found in Aeromonas hydrophila subsp. hydrophila (strain ATCC 7966 / DSM 30187 / BCRC 13018 / CCUG 14551 / JCM 1027 / KCTC 2358 / NCIMB 9240 / NCTC 8049).